The sequence spans 309 residues: 1,2-phenylacetyl-CoA epoxidase, subunit A (309 aa).

Substrate is bound by residues Arg-33, Gln-37, 103-106 (KYSS), Asn-132, Met-193, 202-204 (SPN), Lys-214, and Asn-218.

As to quaternary structure, forms a stable heterotetramer (dimer of heterodimers) with PaaC. Fe cation is required as a cofactor.

The catalysed reaction is phenylacetyl-CoA + NADPH + O2 + H(+) = 2-(1,2-epoxy-1,2-dihydrophenyl)acetyl-CoA + NADP(+) + H2O. It functions in the pathway aromatic compound metabolism; phenylacetate degradation. In terms of biological role, component of 1,2-phenylacetyl-CoA epoxidase multicomponent enzyme system which catalyzes the reduction of phenylacetyl-CoA (PA-CoA) to form 1,2-epoxyphenylacetyl-CoA. The subunit A is the catalytic subunit involved in the incorporation of one atom of molecular oxygen into phenylacetyl-CoA. The sequence is that of 1,2-phenylacetyl-CoA epoxidase, subunit A (paaA) from Escherichia coli (strain K12).